The sequence spans 150 residues: Small ribosomal subunit protein eS19 (150 aa).

The protein belongs to the eukaryotic ribosomal protein eS19 family. In terms of assembly, part of the 30S ribosomal subunit.

Functionally, may be involved in maturation of the 30S ribosomal subunit. The protein is Small ribosomal subunit protein eS19 (rps19e) of Pyrococcus abyssi (strain GE5 / Orsay).